Here is a 297-residue protein sequence, read N- to C-terminus: HTH-type transcriptional regulator AceR (297 aa).

The 60-residue stretch at 1 to 60 folds into the HTH lysR-type domain; that stretch reads MNINQEQLLMFQAVMETGSFSAAARKLGKVPSAVSMSIANLEIDLNLTLFERKGREPTPT. The segment at residues 20–39 is a DNA-binding region (H-T-H motif); it reads FSAAARKLGKVPSAVSMSIA.

Belongs to the LysR transcriptional regulatory family. In terms of assembly, homodimer and homotetramer. Binding of chlorhexidine at the inducer-binding domain causes a quaternary structural change that favors interactions between dimers to form tetramers.

It localises to the cytoplasm. Functionally, regulates the expression of the AceI transporter. Binds DNA and chlorhexidine. Binds to regulatory sites within the intergenic region between the aceI and aceR genes, and affects the interaction between RNA polymerase (RNAP) and promoter DNA both in the presence and in the absence of chlorhexidine. In the absence of chlorhexidine, prevents transcription of the aceI gene by disrupting interactions between the promoter DNA and RNAP. In the presence of chlorhexidine, activates expression of aceI. When AceR interacts with chlorhexidine, it undergoes a conformational change and the tetrameric form either releases the DNA or shifts the position of the DNA-binding region to allow RNAP to bind onto the promoter DNA to proceed with aceI transcription. The polypeptide is HTH-type transcriptional regulator AceR (Acinetobacter baumannii (strain ATCC 17978 / DSM 105126 / CIP 53.77 / LMG 1025 / NCDC KC755 / 5377)).